A 433-amino-acid chain; its full sequence is Mannan endo-1,4-beta-mannosidase 2 (433 aa).

Residues 1–28 (MAAPTGNGPVIPILGFLTCVAFIYLSFG) form the signal peptide. Residue N46 is glycosylated (N-linked (GlcNAc...) asparagine). Residue W98 participates in substrate binding. A glycan (N-linked (GlcNAc...) asparagine) is linked at N169. N214 contacts substrate. E215 serves as the catalytic Proton donor. Residue Y295 coordinates substrate. The active-site Nucleophile is E335. W377 serves as a coordination point for substrate.

It belongs to the glycosyl hydrolase 5 (cellulase A) family. In terms of tissue distribution, expressed in roots, stems, leaves and seeds.

It localises to the secreted. It carries out the reaction Random hydrolysis of (1-&gt;4)-beta-D-mannosidic linkages in mannans, galactomannans and glucomannans.. This is Mannan endo-1,4-beta-mannosidase 2 (MAN2) from Arabidopsis thaliana (Mouse-ear cress).